Consider the following 372-residue polypeptide: Chaperone protein DnaJ (372 aa).

The 66-residue stretch at 5–70 folds into the J domain; it reads DYYDLLEVSR…EKRAGYDRYG (66 aa). The segment at 134 to 212 adopts a CR-type zinc-finger fold; it reads GIQAPIHYVT…CGGSGRKRDE (79 aa). Positions 147, 150, 164, 167, 186, 189, 200, and 203 each coordinate Zn(2+). CXXCXGXG motif repeat units lie at residues 147–154, 164–171, 186–193, and 200–207; these read CNTCQGTG, CNTCQGSG, CTTCYGEG, and CKKCGGSG.

This sequence belongs to the DnaJ family. In terms of assembly, homodimer. Zn(2+) is required as a cofactor.

It localises to the cytoplasm. In terms of biological role, participates actively in the response to hyperosmotic and heat shock by preventing the aggregation of stress-denatured proteins and by disaggregating proteins, also in an autonomous, DnaK-independent fashion. Unfolded proteins bind initially to DnaJ; upon interaction with the DnaJ-bound protein, DnaK hydrolyzes its bound ATP, resulting in the formation of a stable complex. GrpE releases ADP from DnaK; ATP binding to DnaK triggers the release of the substrate protein, thus completing the reaction cycle. Several rounds of ATP-dependent interactions between DnaJ, DnaK and GrpE are required for fully efficient folding. Also involved, together with DnaK and GrpE, in the DNA replication of plasmids through activation of initiation proteins. This chain is Chaperone protein DnaJ, found in Wolbachia pipientis subsp. Culex pipiens (strain wPip).